We begin with the raw amino-acid sequence, 423 residues long: Lysosomal acid phosphatase (423 aa).

An N-terminal signal peptide occupies residues 1-30; that stretch reads MAGRRFGWSRAALLQLILGVNLMVMPRTQA. Over 31–380 the chain is Lumenal; sequence RTLRFVTLLY…QLAGGPADTE (350 aa). Residue H42 is the Nucleophile of the active site. N92, N133, N167, N177, N191, and N267 each carry an N-linked (GlcNAc...) asparagine glycan. Intrachain disulfides connect C159/C370, C212/C310, and C345/C349. The Proton donor role is filled by D287. 2 N-linked (GlcNAc...) asparagine glycosylation sites follow: N322 and N331. The helical transmembrane segment at 381–401 threads the bilayer; it reads VIVALAVCGSILFLLIVLLLT. The Cytoplasmic portion of the chain corresponds to 402 to 423; it reads VLFRVQAQPPGYRHVPDGEDHA.

Belongs to the histidine acid phosphatase family. Post-translationally, the membrane-bound form is converted to the soluble form by sequential proteolytic processing. First, the C-terminal cytoplasmic tail is removed. Cleavage by a lysosomal protease releases the soluble form in the lysosome lumen.

It localises to the lysosome membrane. The protein resides in the lysosome lumen. It carries out the reaction a phosphate monoester + H2O = an alcohol + phosphate. The polypeptide is Lysosomal acid phosphatase (ACP2) (Bos taurus (Bovine)).